Reading from the N-terminus, the 251-residue chain is MWRLLTRAPAPLWRMHFSDTWAALPTSAGLKTLLPVPTFENVSIPERSKLKFVERVPLVPKVRREPKNLKDIRGPSAEATDFTEGNFAILALGGGYLHWGHFEMMRLTINRFMDPKNMFAIWRVPAPFKPITRKGVGQRMGGGKGAIDHYVTPVKTGCLIVEMGGRCEFEEVKRVLNQVAHKLPFPAKAVSRKTLEKMHQNQKERELNNQNPWTFERIATANMFGIRKFLSPYDLTQKGRYWGKFYMPKRV.

The transit peptide at 1–29 directs the protein to the mitochondrion; sequence MWRLLTRAPAPLWRMHFSDTWAALPTSAG.

Belongs to the universal ribosomal protein uL16 family. As to quaternary structure, component of the mitochondrial ribosome large subunit (39S) which comprises a 16S rRNA and about 50 distinct proteins.

It localises to the mitochondrion. This is Large ribosomal subunit protein uL16m (Mrpl16) from Rattus norvegicus (Rat).